Reading from the N-terminus, the 336-residue chain is Holliday junction branch migration complex subunit RuvB (336 aa).

Positions Ala-4 to Tyr-184 are large ATPase domain (RuvB-L). ATP contacts are provided by residues Arg-24, Gly-65, Lys-68, Thr-69, Thr-70, Glu-131–Tyr-133, Arg-174, Tyr-184, and Arg-221. Thr-69 is a Mg(2+) binding site. Positions Asn-185 to Ala-255 are small ATPAse domain (RuvB-S). The head domain (RuvB-H) stretch occupies residues Thr-258 to Gly-336. DNA-binding residues include Arg-294, Arg-313, and Arg-318.

This sequence belongs to the RuvB family. In terms of assembly, homohexamer. Forms an RuvA(8)-RuvB(12)-Holliday junction (HJ) complex. HJ DNA is sandwiched between 2 RuvA tetramers; dsDNA enters through RuvA and exits via RuvB. An RuvB hexamer assembles on each DNA strand where it exits the tetramer. Each RuvB hexamer is contacted by two RuvA subunits (via domain III) on 2 adjacent RuvB subunits; this complex drives branch migration. In the full resolvosome a probable DNA-RuvA(4)-RuvB(12)-RuvC(2) complex forms which resolves the HJ.

It localises to the cytoplasm. It carries out the reaction ATP + H2O = ADP + phosphate + H(+). Functionally, the RuvA-RuvB-RuvC complex processes Holliday junction (HJ) DNA during genetic recombination and DNA repair, while the RuvA-RuvB complex plays an important role in the rescue of blocked DNA replication forks via replication fork reversal (RFR). RuvA specifically binds to HJ cruciform DNA, conferring on it an open structure. The RuvB hexamer acts as an ATP-dependent pump, pulling dsDNA into and through the RuvAB complex. RuvB forms 2 homohexamers on either side of HJ DNA bound by 1 or 2 RuvA tetramers; 4 subunits per hexamer contact DNA at a time. Coordinated motions by a converter formed by DNA-disengaged RuvB subunits stimulates ATP hydrolysis and nucleotide exchange. Immobilization of the converter enables RuvB to convert the ATP-contained energy into a lever motion, pulling 2 nucleotides of DNA out of the RuvA tetramer per ATP hydrolyzed, thus driving DNA branch migration. The RuvB motors rotate together with the DNA substrate, which together with the progressing nucleotide cycle form the mechanistic basis for DNA recombination by continuous HJ branch migration. Branch migration allows RuvC to scan DNA until it finds its consensus sequence, where it cleaves and resolves cruciform DNA. The polypeptide is Holliday junction branch migration complex subunit RuvB (Pectobacterium carotovorum subsp. carotovorum (strain PC1)).